The following is a 336-amino-acid chain: tRNA N6-adenosine threonylcarbamoyltransferase (336 aa).

Fe cation is bound by residues His114 and His118. Residues 136-140 (LVSGG), Asp169, Gly182, Asp186, and Asn275 each bind substrate. Asp301 lines the Fe cation pocket.

It belongs to the KAE1 / TsaD family. Fe(2+) serves as cofactor.

It is found in the cytoplasm. The catalysed reaction is L-threonylcarbamoyladenylate + adenosine(37) in tRNA = N(6)-L-threonylcarbamoyladenosine(37) in tRNA + AMP + H(+). Its function is as follows. Required for the formation of a threonylcarbamoyl group on adenosine at position 37 (t(6)A37) in tRNAs that read codons beginning with adenine. Is involved in the transfer of the threonylcarbamoyl moiety of threonylcarbamoyl-AMP (TC-AMP) to the N6 group of A37, together with TsaE and TsaB. TsaD likely plays a direct catalytic role in this reaction. The polypeptide is tRNA N6-adenosine threonylcarbamoyltransferase (Streptococcus pneumoniae serotype 19F (strain G54)).